A 292-amino-acid polypeptide reads, in one-letter code: Glycine--tRNA ligase alpha subunit (292 aa).

This sequence belongs to the class-II aminoacyl-tRNA synthetase family. In terms of assembly, tetramer of two alpha and two beta subunits.

The protein localises to the cytoplasm. It carries out the reaction tRNA(Gly) + glycine + ATP = glycyl-tRNA(Gly) + AMP + diphosphate. The sequence is that of Glycine--tRNA ligase alpha subunit from Desulfovibrio desulfuricans (strain ATCC 27774 / DSM 6949 / MB).